A 499-amino-acid chain; its full sequence is Glycerol kinase (499 aa).

Threonine 13 contacts ADP. ATP-binding residues include threonine 13, threonine 14, and serine 15. Threonine 13 contributes to the sn-glycerol 3-phosphate binding site. ADP is bound at residue arginine 17. Residues arginine 83, glutamate 84, tyrosine 135, and aspartate 245 each coordinate sn-glycerol 3-phosphate. Glycerol-binding residues include arginine 83, glutamate 84, tyrosine 135, aspartate 245, and glutamine 246. Residues threonine 267 and glycine 310 each coordinate ADP. 4 residues coordinate ATP: threonine 267, glycine 310, glutamine 314, and glycine 411. Residues glycine 411 and asparagine 415 each coordinate ADP.

This sequence belongs to the FGGY kinase family.

It catalyses the reaction glycerol + ATP = sn-glycerol 3-phosphate + ADP + H(+). Its pathway is polyol metabolism; glycerol degradation via glycerol kinase pathway; sn-glycerol 3-phosphate from glycerol: step 1/1. Inhibited by fructose 1,6-bisphosphate (FBP). Key enzyme in the regulation of glycerol uptake and metabolism. Catalyzes the phosphorylation of glycerol to yield sn-glycerol 3-phosphate. This chain is Glycerol kinase, found in Stenotrophomonas maltophilia (strain R551-3).